Consider the following 319-residue polypeptide: ATP-dependent 6-phosphofructokinase (319 aa).

Gly-11 serves as a coordination point for ATP. An ADP-binding site is contributed by 21 to 25 (RAVVR). ATP-binding positions include 72–73 (RC) and 102–105 (GDGS). Asp-103 contributes to the Mg(2+) binding site. A substrate-binding site is contributed by 125–127 (TID). Asp-127 acts as the Proton acceptor in catalysis. Arg-154 lines the ADP pocket. Substrate-binding positions include Arg-162 and 169–171 (MGR). ADP contacts are provided by residues 185 to 187 (GAE), Arg-211, and 213 to 215 (KKH). Substrate contacts are provided by residues Glu-222, Arg-243, and 249 to 252 (HIQR).

It belongs to the phosphofructokinase type A (PFKA) family. ATP-dependent PFK group I subfamily. Prokaryotic clade 'B1' sub-subfamily. In terms of assembly, homotetramer. Mg(2+) serves as cofactor.

It is found in the cytoplasm. The catalysed reaction is beta-D-fructose 6-phosphate + ATP = beta-D-fructose 1,6-bisphosphate + ADP + H(+). The protein operates within carbohydrate degradation; glycolysis; D-glyceraldehyde 3-phosphate and glycerone phosphate from D-glucose: step 3/4. With respect to regulation, allosterically activated by ADP and other diphosphonucleosides, and allosterically inhibited by phosphoenolpyruvate. In terms of biological role, catalyzes the phosphorylation of D-fructose 6-phosphate to fructose 1,6-bisphosphate by ATP, the first committing step of glycolysis. The chain is ATP-dependent 6-phosphofructokinase from Bacillus licheniformis (strain ATCC 14580 / DSM 13 / JCM 2505 / CCUG 7422 / NBRC 12200 / NCIMB 9375 / NCTC 10341 / NRRL NRS-1264 / Gibson 46).